A 218-amino-acid chain; its full sequence is Large ribosomal subunit protein eL13 (218 aa).

The segment at 196 to 218 is disordered; that stretch reads AKRAKEAAESEDAAKGDPKKAKK. A compositionally biased stretch (basic and acidic residues) spans 199-218; the sequence is AKEAAESEDAAKGDPKKAKK.

The protein belongs to the eukaryotic ribosomal protein eL13 family. In terms of assembly, component of the 60S large ribosomal subunit (LSU).

It localises to the cytoplasm. In terms of biological role, component of the ribosome, a large ribonucleoprotein complex responsible for the synthesis of proteins in the cell. The small ribosomal subunit (SSU) binds messenger RNAs (mRNAs) and translates the encoded message by selecting cognate aminoacyl-transfer RNA (tRNA) molecules. The large subunit (LSU) contains the ribosomal catalytic site termed the peptidyl transferase center (PTC), which catalyzes the formation of peptide bonds, thereby polymerizing the amino acids delivered by tRNAs into a polypeptide chain. The nascent polypeptides leave the ribosome through a tunnel in the LSU and interact with protein factors that function in enzymatic processing, targeting, and the membrane insertion of nascent chains at the exit of the ribosomal tunnel. As part of the LSU, it is probably required for its formation and the maturation of rRNAs. This is Large ribosomal subunit protein eL13 (RpL13) from Drosophila melanogaster (Fruit fly).